The chain runs to 37 residues: Photosystem II reaction center protein M (37 aa).

Residues 5–25 form a helical membrane-spanning segment; sequence ILAFIATALFILVPTAFLLII.

The protein belongs to the PsbM family. As to quaternary structure, PSII is composed of 1 copy each of membrane proteins PsbA, PsbB, PsbC, PsbD, PsbE, PsbF, PsbH, PsbI, PsbJ, PsbK, PsbL, PsbM, PsbT, PsbX, PsbY, PsbZ, Psb30/Ycf12, at least 3 peripheral proteins of the oxygen-evolving complex and a large number of cofactors. It forms dimeric complexes.

It is found in the plastid. The protein localises to the chloroplast thylakoid membrane. Functionally, one of the components of the core complex of photosystem II (PSII). PSII is a light-driven water:plastoquinone oxidoreductase that uses light energy to abstract electrons from H(2)O, generating O(2) and a proton gradient subsequently used for ATP formation. It consists of a core antenna complex that captures photons, and an electron transfer chain that converts photonic excitation into a charge separation. This subunit is found at the monomer-monomer interface. In Pelargonium hortorum (Common geranium), this protein is Photosystem II reaction center protein M.